Here is a 69-residue protein sequence, read N- to C-terminus: Probable molybdenum-pterin-binding protein (69 aa).

The Mop domain occupies 2-68 (KISARNQLKG…IKATSVMVGV (67 aa)).

It to C.pasteurianum MOP proteins.

Binds one mole of molybdenum per mole of protein and contains a pterin. This chain is Probable molybdenum-pterin-binding protein, found in Haemophilus influenzae (strain ATCC 51907 / DSM 11121 / KW20 / Rd).